The following is a 324-amino-acid chain: Sperm acrosome membrane-associated protein 6 (324 aa).

The N-terminal stretch at 1 to 26 is a signal peptide; sequence MALLALASAVPSALLALAVFRVPAWA. The CXXC motif signature appears at 27–30; that stretch reads CLLC. 6 disulfides stabilise this stretch: cysteine 27–cysteine 139, cysteine 30–cysteine 142, cysteine 41–cysteine 55, cysteine 124–cysteine 147, cysteine 128–cysteine 153, and cysteine 170–cysteine 226. The Extracellular segment spans residues 27–295; the sequence is CLLCFTTYSE…RPEALTPSNL (269 aa). Positions 139 to 142 match the CXXC motif motif; sequence CSGC. The Ig-like domain maps to 150 to 236; the sequence is PLDCPVQDVT…VIKQDQRPLA (87 aa). Asparagine 243 carries an N-linked (GlcNAc...) asparagine glycan. A helical transmembrane segment spans residues 296–316; the sequence is FLLAVLGALASASATVLAWMF. At 317 to 324 the chain is on the cytoplasmic side; sequence FRWYCSGN.

It belongs to the SPACA6 family. As to quaternary structure, forms a complex with IZUMO1 and TMEM81 on spermatocyte cell membrane required for fertilization. Detected at the sperm head, equatorial region, neck and midpiece (at protein level). Expressed in testis.

The protein resides in the cytoplasmic vesicle. It localises to the secretory vesicle. Its subcellular location is the acrosome membrane. In terms of biological role, sperm protein required for fusion of sperm with the egg membrane during fertilization. May regulate the expression of sperm surface protein DCST2. The polypeptide is Sperm acrosome membrane-associated protein 6 (Homo sapiens (Human)).